A 259-amino-acid polypeptide reads, in one-letter code: 3-deoxy-manno-octulosonate cytidylyltransferase (259 aa).

This sequence belongs to the KdsB family.

It localises to the cytoplasm. The catalysed reaction is 3-deoxy-alpha-D-manno-oct-2-ulosonate + CTP = CMP-3-deoxy-beta-D-manno-octulosonate + diphosphate. The protein operates within nucleotide-sugar biosynthesis; CMP-3-deoxy-D-manno-octulosonate biosynthesis; CMP-3-deoxy-D-manno-octulosonate from 3-deoxy-D-manno-octulosonate and CTP: step 1/1. Its pathway is bacterial outer membrane biogenesis; lipopolysaccharide biosynthesis. Its function is as follows. Activates KDO (a required 8-carbon sugar) for incorporation into bacterial lipopolysaccharide in Gram-negative bacteria. The chain is 3-deoxy-manno-octulosonate cytidylyltransferase from Xanthomonas axonopodis pv. citri (strain 306).